Here is an 801-residue protein sequence, read N- to C-terminus: Protocadherin beta-8 (801 aa).

Residues 1–29 (MEASGKLICRQRQVLFSFLLLGLSLAGAA) form the signal peptide. The Extracellular portion of the chain corresponds to 30 to 691 (EPRSYSVVEE…GQADSLTVYL (662 aa)). 5 consecutive Cadherin domains span residues 36–134 (VVEE…SPVF), 139–243 (MLVK…APEF), 248–348 (YRVQ…APEV), 353–452 (FTSP…APAF), and 457–562 (YTLF…SPFV). An intrachain disulfide couples cysteine 97 to cysteine 103. N-linked (GlcNAc...) asparagine glycosylation is found at asparagine 419 and asparagine 437. Asparagine 568 is a glycosylation site (N-linked (GlcNAc...) asparagine). The Cadherin 6 domain occupies 569-672 (SSAPCTELVP…LVDGFSQPYL (104 aa)). Residues 692-710 (VVALASVSSLFLFSVLLFV) traverse the membrane as a helical segment. The Cytoplasmic portion of the chain corresponds to 711 to 801 (AVRLCRRSRA…NGFGFSLQLK (91 aa)).

In terms of assembly, forms homodimers in trans (molecules expressed by two different cells). Forms promiscuous heterodimers in cis (at the plasma membrane of the same cell) with other protocadherins.

The protein localises to the cell membrane. In terms of biological role, calcium-dependent cell-adhesion protein involved in cells self-recognition and non-self discrimination. Thereby, it is involved in the establishment and maintenance of specific neuronal connections in the brain. The chain is Protocadherin beta-8 from Pan troglodytes (Chimpanzee).